Here is a 134-residue protein sequence, read N- to C-terminus: Protein LctB (134 aa).

The polypeptide is Protein LctB (lctB) (Geobacillus stearothermophilus (Bacillus stearothermophilus)).